The following is a 301-amino-acid chain: UDP-N-acetylenolpyruvoylglucosamine reductase (301 aa).

The FAD-binding PCMH-type domain maps to 26-193 (KTGGPAQYLA…VSATFGLEPG (168 aa)). Arginine 172 is a catalytic residue. The active-site Proton donor is serine 222. Residue glutamate 292 is part of the active site.

It belongs to the MurB family. FAD serves as cofactor.

The protein localises to the cytoplasm. It catalyses the reaction UDP-N-acetyl-alpha-D-muramate + NADP(+) = UDP-N-acetyl-3-O-(1-carboxyvinyl)-alpha-D-glucosamine + NADPH + H(+). The protein operates within cell wall biogenesis; peptidoglycan biosynthesis. Functionally, cell wall formation. The sequence is that of UDP-N-acetylenolpyruvoylglucosamine reductase from Lactobacillus johnsonii (strain CNCM I-12250 / La1 / NCC 533).